Consider the following 472-residue polypeptide: Coronin-6 (472 aa).

5 WD repeats span residues 79–119 (GHTG…PVRN), 129–169 (GHSK…VLLS), 173–212 (IHPD…VVAE), 216–259 (AHEG…EPVA), and 264–304 (DTSN…PFVH). The interval 409 to 434 (NILDVRPPASPRRSQSASEAPLSQQH) is disordered. A compositionally biased stretch (low complexity) spans 419-429 (PRRSQSASEAP). Residues 430–469 (LSQQHTLETLLEEMKALRERVQAQEERITALENMLCELVD) adopt a coiled-coil conformation.

The chain is Coronin-6 (Coro6) from Rattus norvegicus (Rat).